The following is a 318-amino-acid chain: tRNA-cytidine(32) 2-sulfurtransferase (318 aa).

The segment at 1 to 29 (MNHVSSTKPDTAPSKHLTSSHIDATDQNN) is disordered. Positions 16–27 (HLTSSHIDATDQ) are enriched in polar residues. The PP-loop motif signature appears at 64 to 69 (SGGKDS). Cysteine 139, cysteine 142, and cysteine 230 together coordinate [4Fe-4S] cluster.

Belongs to the TtcA family. In terms of assembly, homodimer. Mg(2+) is required as a cofactor. [4Fe-4S] cluster serves as cofactor.

Its subcellular location is the cytoplasm. The enzyme catalyses cytidine(32) in tRNA + S-sulfanyl-L-cysteinyl-[cysteine desulfurase] + AH2 + ATP = 2-thiocytidine(32) in tRNA + L-cysteinyl-[cysteine desulfurase] + A + AMP + diphosphate + H(+). The protein operates within tRNA modification. Functionally, catalyzes the ATP-dependent 2-thiolation of cytidine in position 32 of tRNA, to form 2-thiocytidine (s(2)C32). The sulfur atoms are provided by the cysteine/cysteine desulfurase (IscS) system. This chain is tRNA-cytidine(32) 2-sulfurtransferase, found in Pseudoalteromonas atlantica (strain T6c / ATCC BAA-1087).